Consider the following 419-residue polypeptide: L-rhamnose isomerase (419 aa).

Histidine 262, aspartate 294, and aspartate 296 together coordinate Mn(2+).

This sequence belongs to the rhamnose isomerase family. As to quaternary structure, homotetramer. It depends on Mn(2+) as a cofactor.

It is found in the cytoplasm. It carries out the reaction L-rhamnopyranose = L-rhamnulose. Its pathway is carbohydrate degradation; L-rhamnose degradation; glycerone phosphate from L-rhamnose: step 1/3. Its function is as follows. Catalyzes the interconversion of L-rhamnose and L-rhamnulose. This is L-rhamnose isomerase from Shigella flexneri serotype 5b (strain 8401).